A 223-amino-acid chain; its full sequence is SCMKAAPMKEVGVRGQGSLAYPGLRTQGNLETLSGPNDATRGLTSLADTFEHVIEELLDEQQAIQPSKENKDADLYSTRVMLSSQVPLEPPLLFLLEEYKNYLDAANMSXRVRRHSDPARRGELSVCDSTSEWVTAAEKKTAVDMSGATVTVLEKVPVPKGQLKQYFYETKCSSKGYAKEGCRGIDKRYWNSQCRTTQSFVRALTMDNKKRVGWRFIRIDTSC.

A signal peptide spans 1–5 (SCMKA). The propeptide occupies 6-114 (APMKEVGVRG…AANMSXRVRR (109 aa)). The N-linked (GlcNAc...) asparagine glycan is linked to Asn107. 2 cysteine pairs are disulfide-bonded: Cys127-Cys194 and Cys172-Cys223.

This sequence belongs to the NGF-beta family.

It is found in the secreted. Functionally, promotes the survival of neuronal populations that are all located either in the central nervous system or directly connected to it. The sequence is that of Neurotrophic factor BDNF precursor form (BDNF) from Eryx jayakari (Arabian sand boa).